Here is a 457-residue protein sequence, read N- to C-terminus: Succinate-semialdehyde dehydrogenase [NADP(+)] (457 aa).

Residues 133-134 (WN), 157-160 (KHAS), and 209-210 (GS) contribute to the NADP(+) site. Residue Glu-231 is the Proton acceptor of the active site. Leu-232 is a binding site for NADP(+). The Nucleophile role is filled by Cys-265. Glu-362 contacts NADP(+).

This sequence belongs to the aldehyde dehydrogenase family.

It catalyses the reaction succinate semialdehyde + NADP(+) + H2O = succinate + NADPH + 2 H(+). Its function is as follows. Catalyzes the NADP(+)-dependent oxidation of succinate semialdehyde to succinate. It is believed to be the main source of succinate semialdehyde dehydrogenase activity in Mycobacterium. This Mycobacterium leprae (strain TN) protein is Succinate-semialdehyde dehydrogenase [NADP(+)] (gabD1).